The following is a 103-amino-acid chain: uncharacterized protein (103 aa).

3 consecutive transmembrane segments (helical) span residues 12-34, 49-66, and 79-101; these read GFSWGIALFCLPILLWPLALTIS, TLMSVFLWAYPFGLALIA, and FARGLLGLSAVAFYGMLFYVAGG.

The protein localises to the cell membrane. This is an uncharacterized protein from Pasteurella multocida (strain Pm70).